Reading from the N-terminus, the 427-residue chain is UPF0229 protein YeaH (427 aa).

Positions 84–110 are disordered; sequence QSDRIERPQGGGGGSGSGQGQASQDGE. The segment covering 92–102 has biased composition (gly residues); it reads QGGGGGSGSGQ.

This sequence belongs to the UPF0229 family.

In Escherichia fergusonii (strain ATCC 35469 / DSM 13698 / CCUG 18766 / IAM 14443 / JCM 21226 / LMG 7866 / NBRC 102419 / NCTC 12128 / CDC 0568-73), this protein is UPF0229 protein YeaH.